A 355-amino-acid polypeptide reads, in one-letter code: Ubiquinone biosynthesis protein COQ4 homolog, mitochondrial (355 aa).

Zn(2+)-binding residues include His134, Asp135, His138, and Glu150.

Belongs to the COQ4 family. Component of a multi-subunit COQ enzyme complex. Requires Zn(2+) as cofactor.

The protein resides in the mitochondrion inner membrane. The enzyme catalyses a 4-hydroxy-3-methoxy-5-(all-trans-polyprenyl)benzoate + H(+) = a 2-methoxy-6-(all-trans-polyprenyl)phenol + CO2. It functions in the pathway cofactor biosynthesis; ubiquinone biosynthesis. Lyase that catalyzes the C1-decarboxylation of 4-hydroxy-3-methoxy-5-(all-trans-polyprenyl)benzoic acid into 2-methoxy-6-(all-trans-polyprenyl)phenol during ubiquinone biosynthesis. This is Ubiquinone biosynthesis protein COQ4 homolog, mitochondrial from Plasmodium knowlesi (strain H).